Here is a 125-residue protein sequence, read N- to C-terminus: Basic leucine zipper transcriptional factor ATF-like (125 aa).

The span at 1–14 shows a compositional bias: low complexity; the sequence is MPHSSDSSDSSFSR. The tract at residues 1 to 59 is disordered; sequence MPHSSDSSDSSFSRSPPPGKQDSSDDVRKVQRREKNRIAAQKSRQRQTQKADTLHLESE. The region spanning 26–89 is the bZIP domain; that stretch reads DVRKVQRREK…KYFTSVLSSH (64 aa). Positions 28–50 are basic motif; it reads RKVQRREKNRIAAQKSRQRQTQK. The residue at position 43 (serine 43) is a Phosphoserine. Residue threonine 48 is modified to Phosphothreonine. Residues 54 to 75 are leucine-zipper; it reads LHLESEDLEKQNAALRKEIKQL.

The protein belongs to the bZIP family. In terms of assembly, heterodimer; mainly heterodimerizes with JUNB. The BATF-JUNB heterodimer interacts with IRF4 and IRF8. Interacts (via bZIP domain) with IRF4 and IRF8; the interaction is direct. Also forms heterodimers with JUN and JUND. Interacts with IFI35. Post-translationally, phosphorylated on serine and threonine residues and at least one tyrosine residue. Phosphorylation at Ser-43 inhibit DNA binding activity and transforms it as a negative regulator of AP-1 mediated transcription. Detected in postnatal and adult lymphoid tissues such as thymus, spleen and lymph nodes. In thymus most concentrated expression is found in the immediate cortical layer. Differentially expressed during T-cell development in thymus. Highly expressed in Th17, Th1 and Th2 cells and in activated B-cells.

It localises to the nucleus. Its subcellular location is the cytoplasm. AP-1 family transcription factor that controls the differentiation of lineage-specific cells in the immune system: specifically mediates the differentiation of T-helper 17 cells (Th17), follicular T-helper cells (TfH), CD8(+) dendritic cells and class-switch recombination (CSR) in B-cells. Acts via the formation of a heterodimer with JUNB that recognizes and binds DNA sequence 5'-TGA[CG]TCA-3'. The BATF-JUNB heterodimer also forms a complex with IRF4 (or IRF8) in immune cells, leading to recognition of AICE sequence (5'-TGAnTCA/GAAA-3'), an immune-specific regulatory element, followed by cooperative binding of BATF and IRF4 (or IRF8) and activation of genes. Controls differentiation of T-helper cells producing interleukin-17 (Th17 cells) by binding to Th17-associated gene promoters: regulates expression of the transcription factor RORC itself and RORC target genes such as IL17 (IL17A or IL17B). Also involved in differentiation of follicular T-helper cells (TfH) by directing expression of BCL6 and MAF. In B-cells, involved in class-switch recombination (CSR) by controlling the expression of both AICDA and of germline transcripts of the intervening heavy-chain region and constant heavy-chain region (I(H)-C(H)). Following infection, can participate in CD8(+) dendritic cell differentiation via interaction with IRF4 and IRF8 to mediate cooperative gene activation. Regulates effector CD8(+) T-cell differentiation by regulating expression of SIRT1. Following DNA damage, part of a differentiation checkpoint that limits self-renewal of hematopoietic stem cells (HSCs): up-regulated by STAT3, leading to differentiation of HSCs, thereby restricting self-renewal of HSCs. The chain is Basic leucine zipper transcriptional factor ATF-like (Batf) from Mus musculus (Mouse).